The primary structure comprises 994 residues: Tyrosine-protein kinase Mer (994 aa).

A signal peptide spans 1–18; that stretch reads MVLAPLLLGLLLLPALWS. The Extracellular portion of the chain corresponds to 19–497; sequence GGTAEKWEET…TPAPGNTDSM (479 aa). The disordered stretch occupies residues 44 to 78; it reads VNHRPFSAPHSSRDQLPPPQTGRSHPAHTAAPQVT. Ig-like C2-type domains follow at residues 75–181 and 192–268; these read PQVT…EIVS and PYFI…LTVS. 15 N-linked (GlcNAc...) asparagine glycosylation sites follow: N91, N108, N165, N202, N210, N229, N289, N311, N324, N331, N349, N384, N390, N437, and N449. A disulfide bond links C109 and C170. C213 and C257 form a disulfide bridge. 2 Fibronectin type-III domains span residues 281 to 376 and 381 to 478; these read PPTE…TTEG and APLN…IPEH. A helical membrane pass occupies residues 498–518; the sequence is FIILGCFCGFILIGLILCISL. Residues 519 to 994 lie on the Cytoplasmic side of the membrane; that stretch reads ALRRRVQETK…DSLEDSEVLM (476 aa). S538 bears the Phosphoserine mark. The 271-residue stretch at 582-852 folds into the Protein kinase domain; the sequence is LVLGKVLGEG…SVLRLQLEKL (271 aa). Residues 588 to 596 and K610 each bind ATP; that span reads LGEGEFGSV. D718 functions as the Proton acceptor in the catalytic mechanism. Y744, Y748, Y749, and Y867 each carry phosphotyrosine; by autocatalysis.

It belongs to the protein kinase superfamily. Tyr protein kinase family. AXL/UFO subfamily. In terms of assembly, interacts (upon activation) with TNK2; stimulates TNK2 autophosphorylation. Interacts (via N-terminus) with extracellular ligands LGALS3, TUB, TULP1 and GAS6. Interacts with VAV1 in a phosphotyrosine-independent manner. Interacts with TIMD4; this interaction enhances TIMD4-mediated efferocytosis. Post-translationally, autophosphorylated on Tyr-744, Tyr-748 and Tyr-749 in the activation loop allowing full activity. Autophosphorylated on Tyr-867 leading to recruitment of downstream partners of the signaling cascade such as PLCG2. Expressed predominantly in the hematopoietic lineages: macrophages, NK cells, NKT cells, dendritic cells and platelets.

It localises to the cell membrane. It carries out the reaction L-tyrosyl-[protein] + ATP = O-phospho-L-tyrosyl-[protein] + ADP + H(+). In terms of biological role, receptor tyrosine kinase that transduces signals from the extracellular matrix into the cytoplasm by binding to several ligands including LGALS3, TUB, TULP1 or GAS6. Regulates many physiological processes including cell survival, migration, differentiation, and phagocytosis of apoptotic cells (efferocytosis). Ligand binding at the cell surface induces autophosphorylation of MERTK on its intracellular domain that provides docking sites for downstream signaling molecules. Following activation by ligand, interacts with GRB2 or PLCG2 and induces phosphorylation of MAPK1, MAPK2, FAK/PTK2 or RAC1. MERTK signaling plays a role in various processes such as macrophage clearance of apoptotic cells, platelet aggregation, cytoskeleton reorganization and engulfment. Functions in the retinal pigment epithelium (RPE) as a regulator of rod outer segments fragments phagocytosis. Also plays an important role in inhibition of Toll-like receptors (TLRs)-mediated innate immune response by activating STAT1, which selectively induces production of suppressors of cytokine signaling SOCS1 and SOCS3. This Mus musculus (Mouse) protein is Tyrosine-protein kinase Mer (Mertk).